We begin with the raw amino-acid sequence, 137 residues long: MERTFAIIKPDAVERNISGKVLDRIEGAGFKIVGMKKIHLTKKEAEGFYYVHKERPFFNDLCTFMSRNPVIVLALEKDNAIAAWRELMGATNPANADAGTIRKDLGVSIEENTVHGSDSPESAAFEIPYFFSSLELV.

ATP is bound by residues Lys9, Phe57, Arg85, Thr91, Arg102, and Asn112. The Pros-phosphohistidine intermediate role is filled by His115.

The protein belongs to the NDK family. Homotetramer. The cofactor is Mg(2+).

It localises to the cytoplasm. It carries out the reaction a 2'-deoxyribonucleoside 5'-diphosphate + ATP = a 2'-deoxyribonucleoside 5'-triphosphate + ADP. The enzyme catalyses a ribonucleoside 5'-diphosphate + ATP = a ribonucleoside 5'-triphosphate + ADP. Functionally, major role in the synthesis of nucleoside triphosphates other than ATP. The ATP gamma phosphate is transferred to the NDP beta phosphate via a ping-pong mechanism, using a phosphorylated active-site intermediate. This is Nucleoside diphosphate kinase from Geotalea daltonii (strain DSM 22248 / JCM 15807 / FRC-32) (Geobacter daltonii).